The sequence spans 463 residues: Glutamyl-tRNA(Gln) amidotransferase subunit A, mitochondrial (463 aa).

Residues lysine 47 and serine 124 each act as charge relay system in the active site. Residue serine 148 is the Acyl-ester intermediate of the active site.

Belongs to the amidase family. GatA subfamily. Subunit of the heterotrimeric GatFAB amidotransferase (AdT) complex, composed of A, B and F subunits.

It localises to the mitochondrion. It carries out the reaction L-glutamyl-tRNA(Gln) + L-glutamine + ATP + H2O = L-glutaminyl-tRNA(Gln) + L-glutamate + ADP + phosphate + H(+). Its function is as follows. Allows the formation of correctly charged Gln-tRNA(Gln) through the transamidation of misacylated Glu-tRNA(Gln) in the mitochondria. The reaction takes place in the presence of glutamine and ATP through an activated gamma-phospho-Glu-tRNA(Gln). In Eremothecium gossypii (strain ATCC 10895 / CBS 109.51 / FGSC 9923 / NRRL Y-1056) (Yeast), this protein is Glutamyl-tRNA(Gln) amidotransferase subunit A, mitochondrial.